The primary structure comprises 425 residues: Riboflavin biosynthesis protein RibBA (425 aa).

The DHBP synthase stretch occupies residues 1–204; the sequence is MTRLDSVERA…IADLIEWRRK (204 aa). D-ribulose 5-phosphate is bound by residues 28–29, Asp-33, 141–145, and Glu-165; these read RE and RPGHT. Glu-29 serves as a coordination point for Mg(2+). His-144 serves as a coordination point for Mg(2+). The GTP cyclohydrolase II stretch occupies residues 205 to 425; it reads HEKHIERVAE…HLPGEFGGAL (221 aa). Residue 259–263 participates in GTP binding; the sequence is RVHSE. Positions 264, 275, and 277 each coordinate Zn(2+). GTP is bound by residues Gln-280, 303-305, and Thr-325; that span reads EGR. Asp-337 acts as the Proton acceptor; for GTP cyclohydrolase activity in catalysis. Arg-339 acts as the Nucleophile; for GTP cyclohydrolase activity in catalysis. Residues Thr-360 and Lys-365 each coordinate GTP.

It in the N-terminal section; belongs to the DHBP synthase family. This sequence in the C-terminal section; belongs to the GTP cyclohydrolase II family. It depends on Mg(2+) as a cofactor. Mn(2+) serves as cofactor. Zn(2+) is required as a cofactor.

It catalyses the reaction D-ribulose 5-phosphate = (2S)-2-hydroxy-3-oxobutyl phosphate + formate + H(+). The enzyme catalyses GTP + 4 H2O = 2,5-diamino-6-hydroxy-4-(5-phosphoribosylamino)-pyrimidine + formate + 2 phosphate + 3 H(+). Its pathway is cofactor biosynthesis; riboflavin biosynthesis; 2-hydroxy-3-oxobutyl phosphate from D-ribulose 5-phosphate: step 1/1. It functions in the pathway cofactor biosynthesis; riboflavin biosynthesis; 5-amino-6-(D-ribitylamino)uracil from GTP: step 1/4. Functionally, catalyzes the conversion of D-ribulose 5-phosphate to formate and 3,4-dihydroxy-2-butanone 4-phosphate. Its function is as follows. Catalyzes the conversion of GTP to 2,5-diamino-6-ribosylamino-4(3H)-pyrimidinone 5'-phosphate (DARP), formate and pyrophosphate. This Mycobacterium bovis (strain ATCC BAA-935 / AF2122/97) protein is Riboflavin biosynthesis protein RibBA.